The following is a 335-amino-acid chain: Glycerol-3-phosphate dehydrogenase [NAD(P)+] (335 aa).

Positions 12, 13, 33, 34, and 108 each coordinate NADPH. Lysine 108, glycine 137, and threonine 139 together coordinate sn-glycerol 3-phosphate. Alanine 141 lines the NADPH pocket. Lysine 192, aspartate 245, serine 255, arginine 256, and asparagine 257 together coordinate sn-glycerol 3-phosphate. The Proton acceptor role is filled by lysine 192. Arginine 256 is a binding site for NADPH. Glutamate 282 is a binding site for NADPH.

The protein belongs to the NAD-dependent glycerol-3-phosphate dehydrogenase family.

Its subcellular location is the cytoplasm. It catalyses the reaction sn-glycerol 3-phosphate + NAD(+) = dihydroxyacetone phosphate + NADH + H(+). The enzyme catalyses sn-glycerol 3-phosphate + NADP(+) = dihydroxyacetone phosphate + NADPH + H(+). Its pathway is membrane lipid metabolism; glycerophospholipid metabolism. Functionally, catalyzes the reduction of the glycolytic intermediate dihydroxyacetone phosphate (DHAP) to sn-glycerol 3-phosphate (G3P), the key precursor for phospholipid synthesis. This is Glycerol-3-phosphate dehydrogenase [NAD(P)+] from Methylococcus capsulatus (strain ATCC 33009 / NCIMB 11132 / Bath).